Reading from the N-terminus, the 95-residue chain is Small ribosomal subunit protein bS18 (95 aa).

Belongs to the bacterial ribosomal protein bS18 family. In terms of assembly, part of the 30S ribosomal subunit. Forms a tight heterodimer with protein bS6.

Binds as a heterodimer with protein bS6 to the central domain of the 16S rRNA, where it helps stabilize the platform of the 30S subunit. The chain is Small ribosomal subunit protein bS18 from Rickettsia massiliae (strain Mtu5).